The chain runs to 664 residues: Zinc finger protein 710 (664 aa).

Glycyl lysine isopeptide (Lys-Gly) (interchain with G-Cter in SUMO2) cross-links involve residues lysine 110 and lysine 113. The tract at residues 121-141 (VYEVSVPGDDKDAGPAEAPAE) is disordered. 3 C2H2-type zinc fingers span residues 295–317 (WQCR…ILGH), 323–345 (HSCP…LLTH), and 351–373 (HKCQ…MLLH). Residue lysine 377 forms a Glycyl lysine isopeptide (Lys-Gly) (interchain with G-Cter in SUMO2) linkage. 8 consecutive C2H2-type zinc fingers follow at residues 379–401 (YSCH…EVKH), 407–429 (HVCV…LASH), 435–457 (YQCL…MLKH), 463–485 (FVCT…SLTH), 491–513 (FKCE…MLIH), 519–541 (YQCH…MIVH), 547–569 (FKCK…MHLH), and 575–598 (FKCP…KVKH).

Belongs to the krueppel C2H2-type zinc-finger protein family.

Its subcellular location is the nucleus. May be involved in transcriptional regulation. The sequence is that of Zinc finger protein 710 (ZNF710) from Homo sapiens (Human).